Consider the following 127-residue polypeptide: Chondrosarcoma-associated gene 2/3 protein (127 aa).

Positions 68 to 127 are disordered; sequence MSRKPRASSPLSNNHPPTPKRRGSGRHPLNPGPEALSKFPRQPGREKGPIKEVPGTKGSP.

In terms of tissue distribution, weakly expressed in kidney. Expressed in various tumor cell lines including carcinomas, myeloid and lymphoid malignancies, melanomas and prostate cancer. Overexpressed in taxol-resistant breast cancer line MDA 435TR and the doxorubicin-resistant multiple myelanoma lines RPMI-8226/Dox40 and RPMI-8226/MDR10V.

Its function is as follows. Drug-resistance related protein, its expression is associated with the chemotherapy resistant and neoplastic phenotype. May also be linked to the malignant phenotype. This chain is Chondrosarcoma-associated gene 2/3 protein (CSAG2), found in Homo sapiens (Human).